The following is a 147-amino-acid chain: uncharacterized protein (147 aa).

The region spanning 2–63 is the HTH asnC-type domain; sequence LDELDKKIIG…KLNYENIGYD (62 aa). The H-T-H motif DNA-binding region spans 21-40; the sequence is YREIAKELNVAVGTIYNRIK.

This is an uncharacterized protein from Pyrococcus abyssi (strain GE5 / Orsay).